Here is a 158-residue protein sequence, read N- to C-terminus: Anti-tumor lectin (158 aa).

Glutamine 1 is modified (blocked amino end (Gln)). The Galectin domain maps to 12 to 155 (TSVDLAAPVT…STVVEAVTYT (144 aa)). N-acetyl-alpha-neuraminyl-(2-&gt;3)-beta-D-galactosyl-(1-&gt;4)-beta-D-glucose contacts are provided by asparagine 43, histidine 59, arginine 63, asparagine 72, arginine 74, tryptophan 80, and glutamate 83.

In terms of assembly, homodimer. As to expression, detected in the fruiting body.

Anti-tumor lectin with DNase activity. Inhibits the growth of several tumor cell lines in vitro. Induces lymphocyte infiltration and necrosis of tumor cells in a mouse tumor model. Induces apoptosis in HeLa cells. Binds N-acetylneuraminyl lactose (N-acetyl-alpha-neuraminyl-(2-&gt;3)-beta-D-galactosyl-(1-&gt;4)-beta-D-glucose). The sequence is that of Anti-tumor lectin from Cyclocybe aegerita (Black poplar mushroom).